A 424-amino-acid chain; its full sequence is Protein TUNICAMYCIN INDUCED 1 (424 aa).

The first 25 residues, 1–25, serve as a signal peptide directing secretion; sequence MGHRVLVYVGALFLILFTIFPSSSA. Asparagine 197, asparagine 296, and asparagine 406 each carry an N-linked (GlcNAc...) asparagine glycan.

In terms of tissue distribution, restricted to pollen grains at high levels.

It is found in the endoplasmic reticulum. Involved in the regulation of pollen surface morphology, probably by modulating the secretion of proteins and/or lipids during pollen development. This is Protein TUNICAMYCIN INDUCED 1 from Arabidopsis thaliana (Mouse-ear cress).